Consider the following 329-residue polypeptide: Phenylalanine--tRNA ligase alpha subunit (329 aa).

Mg(2+) is bound at residue glutamate 253.

This sequence belongs to the class-II aminoacyl-tRNA synthetase family. Phe-tRNA synthetase alpha subunit type 1 subfamily. In terms of assembly, tetramer of two alpha and two beta subunits. Requires Mg(2+) as cofactor.

It is found in the cytoplasm. The catalysed reaction is tRNA(Phe) + L-phenylalanine + ATP = L-phenylalanyl-tRNA(Phe) + AMP + diphosphate + H(+). The polypeptide is Phenylalanine--tRNA ligase alpha subunit (Teredinibacter turnerae (strain ATCC 39867 / T7901)).